Consider the following 172-residue polypeptide: MAGSVADSDAVVKLDDGHLNNSLSSPVQADVYFPRLIVPFCGHIKGGMRPGKKVLVMGIVDLNPESFAISLTCGDSEDPPADVAIELKAVFTDRQLLRNSCISGERGEEQSAIPYFPFIPDQPFRVEILCEHPRFRVFVDGHQLFDFYHRIQTLSAIDTIKINGDLQITKLG.

The residue at position 2 (Ala-2) is an N-acetylalanine. Phosphoserine is present on residues Ser-22 and Ser-25. A Galectin domain is found at 39-168; the sequence is PFCGHIKGGM…TIKINGDLQI (130 aa).

In terms of assembly, monomer.

In terms of biological role, does not bind lactose, and may not bind carbohydrates. The polypeptide is Galectin-related protein (LGALSL) (Homo sapiens (Human)).